Here is a 770-residue protein sequence, read N- to C-terminus: MSTGEGTAEQTATGTPAQNGRESIPSDAIREEYENLSDLIRKYRFAYYQDDAPLVSDAEFDTLFRRLEEIEALHPELVANDSPTQEVGGEASAAFAAVEHLQRMYSLEDVFSIEELEAWLNRAEASIAKLGDGTAQAAWLTELKIDGLAVNLLYRDGKLVRAATRGDGTTGEDITHNVLTIKEIPQQLSGEGYPSEVEVRGEVFIPSKAFAEFNEALIEAGKAPLANPRNAAAGSLRQKDPAETAKRPLKMFVHGIGAREGLEARSQSETYALLKEWGLPVSPYFEVLEARADVLGFISKYGEQRHKLLHEIDGIVIKVDDFATQRALGYTTRVPRWAVAYKYPPEEVHTKLLDIQVNVGRTGRVTPFGMMEPVKVAGSTVEMATLHNQDVVKAKGVKIGDIVVLRKAGDVIPEIVGPVLALRDQQDPPVRDFVMPTECPACGTPLAPAKEGDVDIRCPNGKSCPSQLRERVFHLAGRGGFDIEALGWEAAIALTQPAEPDVPPLTSEAALFDLTREDLADVKIRREKRSKGVATGEYELVPYFYSKGTAKSPSKPTASTEKLFKELDKAKSQPLWRVLVALSIRHVGPRASRALAQAFGTMDGIRAASEEELAHVDGVGPTIAAALKEWFAEDWHREIVDRWAAAGVRMEDERDESTPRTLEGLTVVVTGSLPNFSRDEAKEAILVRGGKASGSVSKNTSYVVAGESAGTKLDKAEQLGIRVLDEDGFRLLLDGGPAAVGDAAEADGGDAPEESAALQEEKAAAVEETA.

Positions 1 to 18 are enriched in low complexity; it reads MSTGEGTAEQTATGTPAQ. The interval 1 to 27 is disordered; sequence MSTGEGTAEQTATGTPAQNGRESIPSD. Residues 57-61, 106-107, and E142 contribute to the NAD(+) site; these read DAEFD and SL. Catalysis depends on K144, which acts as the N6-AMP-lysine intermediate. Residues R165, E202, K318, and K342 each coordinate NAD(+). Zn(2+) contacts are provided by C439, C442, C458, and C464. Positions 657–746 constitute a BRCT domain; sequence STPRTLEGLT…PAAVGDAAEA (90 aa). Positions 741–770 are disordered; sequence GDAAEADGGDAPEESAALQEEKAAAVEETA. Residues 744 to 753 show a composition bias toward acidic residues; it reads AEADGGDAPE. Basic and acidic residues predominate over residues 759–770; the sequence is QEEKAAAVEETA.

It belongs to the NAD-dependent DNA ligase family. LigA subfamily. It depends on Mg(2+) as a cofactor. The cofactor is Mn(2+).

It carries out the reaction NAD(+) + (deoxyribonucleotide)n-3'-hydroxyl + 5'-phospho-(deoxyribonucleotide)m = (deoxyribonucleotide)n+m + AMP + beta-nicotinamide D-nucleotide.. In terms of biological role, DNA ligase that catalyzes the formation of phosphodiester linkages between 5'-phosphoryl and 3'-hydroxyl groups in double-stranded DNA using NAD as a coenzyme and as the energy source for the reaction. It is essential for DNA replication and repair of damaged DNA. The sequence is that of DNA ligase 1 from Pseudarthrobacter chlorophenolicus (strain ATCC 700700 / DSM 12829 / CIP 107037 / JCM 12360 / KCTC 9906 / NCIMB 13794 / A6) (Arthrobacter chlorophenolicus).